Here is a 162-residue protein sequence, read N- to C-terminus: uncharacterized protein (162 aa).

Pentapeptide repeat domains are found at residues 33-72 (ASLIGAQLIFVDLGGANLTRAQLDSATLKNANLALANMTE), 73-112 (VCLIYADLSNADLSGANLVGADLTNADLSGAKLGGADLRK), and 113-152 (ANLSEASLRGADLRGVNLIEANLTNTDFSEADLTGAYISD).

This is an uncharacterized protein from Synechocystis sp. (strain ATCC 27184 / PCC 6803 / Kazusa).